Here is a 1020-residue protein sequence, read N- to C-terminus: RNA-binding protein 44 (1020 aa).

Disordered stretches follow at residues 1 to 23 and 50 to 70; these read MQATAVVETDSDKSYHKNGGHLQ and DGEGDSLTTDERTNVKENSSV. Residues 58–70 are compositionally biased toward basic and acidic residues; the sequence is TDERTNVKENSSV. Residues serine 249, serine 371, serine 374, serine 516, serine 683, and serine 690 each carry the phosphoserine modification. The RRM domain maps to 796–870; it reads FLIHVGGLCP…KSVNVRLVKI (75 aa).

In terms of assembly, homodimer. Interacts with TEX14.

The protein localises to the cytoplasm. Functionally, component of intercellular bridges during meiosis. Intercellular bridges are evolutionarily conserved structures that connect differentiating germ cells. Not required for fertility. The sequence is that of RNA-binding protein 44 (Rbm44) from Rattus norvegicus (Rat).